Consider the following 205-residue polypeptide: Rho-related GTP-binding protein RhoQ (205 aa).

Residue 16–23 (GDGAVGKT) coordinates GTP. An Effector region motif is present at residues 38–46 (YVPTVFDHY). GTP contacts are provided by residues 63-67 (DTAGQ) and 121-124 (TQID). The residue at position 202 (Cys202) is a Cysteine methyl ester. Residue Cys202 is the site of S-farnesyl cysteine attachment. Residues 203-205 (LIT) constitute a propeptide, removed in mature form.

The protein belongs to the small GTPase superfamily. Rho family. As to quaternary structure, interacts with CDC42EP4 in a GTP-dependent manner. Interacts with ARHGAP33/TCGAP. Interacts with CDC42EP1, CDC42EP2, CDC42EP3, PARD6A, PARD6G (and probably PARD6B) in a GTP-dependent manner. Part of a quaternary complex containing PARD3, some PARD6 protein (PARD6A, PARD6B or PARD6G) and some atypical PKC protein (PRKCI or PRKCZ). Interacts with EXO70 in a GTP-dependent manner. Interacts with GOPC. Post-translationally, may be post-translationally modified by both palmitoylation and polyisoprenylation.

It is found in the cytoplasm. The protein localises to the cell membrane. With respect to regulation, regulated by guanine nucleotide exchange factors (GEFs) which promote the exchange of bound GDP for free GTP, GTPase activating proteins (GAPs) which increase the GTP hydrolysis activity, and GDP dissociation inhibitors which inhibit the dissociation of the nucleotide from the GTPase. Plasma membrane-associated small GTPase which cycles between an active GTP-bound and an inactive GDP-bound state. In active state binds to a variety of effector proteins to regulate cellular responses. Involved in epithelial cell polarization processes. May play a role in CFTR trafficking to the plasma membrane. Causes the formation of thin, actin-rich surface projections called filopodia. This is Rho-related GTP-binding protein RhoQ (RHOQ) from Homo sapiens (Human).